The chain runs to 459 residues: Argininosuccinate lyase (459 aa).

The protein belongs to the lyase 1 family. Argininosuccinate lyase subfamily.

The protein resides in the cytoplasm. It catalyses the reaction 2-(N(omega)-L-arginino)succinate = fumarate + L-arginine. It participates in amino-acid biosynthesis; L-arginine biosynthesis; L-arginine from L-ornithine and carbamoyl phosphate: step 3/3. This is Argininosuccinate lyase from Oceanobacillus iheyensis (strain DSM 14371 / CIP 107618 / JCM 11309 / KCTC 3954 / HTE831).